Here is a 439-residue protein sequence, read N- to C-terminus: C4-dicarboxylate transport protein (439 aa).

The next 9 membrane-spanning stretches (helical) occupy residues 9–29 (SLYAQVIVAIIIGVLLGHFLP), 45–65 (LIKMIIAPVIFCTVVIGIAGM), 77–97 (LALLYFEVMSTVALLVGLIIV), 145–165 (AFAKGDVLQVLLVSVLFGFAL), 185–205 (VLFTIVGFIMRAAPVGAFGAM), 223–243 (LMGAFYLTCLFFIFVVLGIVT), 290–310 (VVGLVIPTGYSFNLDGTAIYL), 332–352 (TLLAVLLLTSKGAAGITGSGF), and 353–373 (IVLAATLSAVGHVPVAGLALI). The interval 417–439 (NESPQAADQPEKILDQTNTKLGA) is disordered.

The protein belongs to the dicarboxylate/amino acid:cation symporter (DAACS) (TC 2.A.23) family.

Its subcellular location is the cell inner membrane. Responsible for the transport of dicarboxylates such as succinate, fumarate, and malate from the periplasm across the membrane. This chain is C4-dicarboxylate transport protein, found in Janthinobacterium sp. (strain Marseille) (Minibacterium massiliensis).